The following is an 88-amino-acid chain: Small ribosomal subunit protein uS17c (88 aa).

This sequence belongs to the universal ribosomal protein uS17 family. Part of the 30S ribosomal subunit.

The protein resides in the plastid. Its subcellular location is the cyanelle. Functionally, one of the primary rRNA binding proteins, it binds specifically to the 5'-end of 16S ribosomal RNA. The protein is Small ribosomal subunit protein uS17c (rps17) of Cyanophora paradoxa.